The sequence spans 366 residues: Histidinol-phosphate aminotransferase 2 (366 aa).

The span at 1–11 (MQVKDQLSSLQ) shows a compositional bias: polar residues. Residues 1–21 (MQVKDQLSSLQPYKPGKSPEQ) are disordered. An N6-(pyridoxal phosphate)lysine modification is found at K222.

It belongs to the class-II pyridoxal-phosphate-dependent aminotransferase family. Histidinol-phosphate aminotransferase subfamily. Homodimer. Requires pyridoxal 5'-phosphate as cofactor.

It carries out the reaction L-histidinol phosphate + 2-oxoglutarate = 3-(imidazol-4-yl)-2-oxopropyl phosphate + L-glutamate. Its pathway is amino-acid biosynthesis; L-histidine biosynthesis; L-histidine from 5-phospho-alpha-D-ribose 1-diphosphate: step 7/9. The protein is Histidinol-phosphate aminotransferase 2 (hisC2) of Bacillus cereus (strain ATCC 14579 / DSM 31 / CCUG 7414 / JCM 2152 / NBRC 15305 / NCIMB 9373 / NCTC 2599 / NRRL B-3711).